Reading from the N-terminus, the 67-residue chain is DNA-directed RNA polymerase subunit omega (67 aa).

This sequence belongs to the RNA polymerase subunit omega family. The RNAP catalytic core consists of 2 alpha, 1 beta, 1 beta' and 1 omega subunit. When a sigma factor is associated with the core the holoenzyme is formed, which can initiate transcription.

It carries out the reaction RNA(n) + a ribonucleoside 5'-triphosphate = RNA(n+1) + diphosphate. Its function is as follows. Promotes RNA polymerase assembly. Latches the N- and C-terminal regions of the beta' subunit thereby facilitating its interaction with the beta and alpha subunits. The polypeptide is DNA-directed RNA polymerase subunit omega (Listeria monocytogenes serotype 4b (strain F2365)).